Here is a 474-residue protein sequence, read N- to C-terminus: Putative pectinesterase/pectinesterase inhibitor 38 (474 aa).

The interval 1 to 130 is pectinesterase inhibitor 38; sequence MVFGNEMCDE…HSLESITIDV (130 aa). Asn-80 is a glycosylation site (N-linked (GlcNAc...) asparagine). The pectinesterase 38 stretch occupies residues 164 to 461; the sequence is DVVVAQDGSG…TLPKFIDSAS (298 aa). Substrate is bound by residues Thr-241 and Gln-271. Asp-294 functions as the Proton donor; for pectinesterase activity in the catalytic mechanism. Cys-308 and Cys-328 are joined by a disulfide. The active-site Nucleophile; for pectinesterase activity is Asp-315. Asn-351 carries an N-linked (GlcNAc...) asparagine glycan. Substrate is bound by residues Arg-380 and Trp-382. Asn-409 carries an N-linked (GlcNAc...) asparagine glycan.

This sequence in the N-terminal section; belongs to the PMEI family. The protein in the C-terminal section; belongs to the pectinesterase family.

Its subcellular location is the secreted. It localises to the cell wall. It catalyses the reaction [(1-&gt;4)-alpha-D-galacturonosyl methyl ester](n) + n H2O = [(1-&gt;4)-alpha-D-galacturonosyl](n) + n methanol + n H(+). It functions in the pathway glycan metabolism; pectin degradation; 2-dehydro-3-deoxy-D-gluconate from pectin: step 1/5. Its function is as follows. Acts in the modification of cell walls via demethylesterification of cell wall pectin. The polypeptide is Putative pectinesterase/pectinesterase inhibitor 38 (PME38) (Arabidopsis thaliana (Mouse-ear cress)).